The primary structure comprises 207 residues: Large ribosomal subunit protein bL25 (207 aa).

The segment at 182–207 (QDLGDESVQEEQAAESAEGESEGSED) is disordered.

The protein belongs to the bacterial ribosomal protein bL25 family. CTC subfamily. In terms of assembly, part of the 50S ribosomal subunit; part of the 5S rRNA/L5/L18/L25 subcomplex. Contacts the 5S rRNA. Binds to the 5S rRNA independently of L5 and L18.

This is one of the proteins that binds to the 5S RNA in the ribosome where it forms part of the central protuberance. The protein is Large ribosomal subunit protein bL25 of Micrococcus luteus (strain ATCC 4698 / DSM 20030 / JCM 1464 / CCM 169 / CCUG 5858 / IAM 1056 / NBRC 3333 / NCIMB 9278 / NCTC 2665 / VKM Ac-2230) (Micrococcus lysodeikticus).